Reading from the N-terminus, the 448-residue chain is uncharacterized protein (448 aa).

A compositionally biased stretch (polar residues) spans 428-440 (PFKTDCDPNNDND). The interval 428-448 (PFKTDCDPNNDNDLTPPAVFG) is disordered.

This is an uncharacterized protein from Mycoplasma pneumoniae (strain ATCC 29342 / M129 / Subtype 1) (Mycoplasmoides pneumoniae).